A 325-amino-acid polypeptide reads, in one-letter code: Lipoyl synthase (325 aa).

The [4Fe-4S] cluster site is built by Cys-68, Cys-73, Cys-79, Cys-94, Cys-98, Cys-101, and Ser-308. Residues Phe-80 to Thr-297 form the Radical SAM core domain.

The protein belongs to the radical SAM superfamily. Lipoyl synthase family. [4Fe-4S] cluster serves as cofactor.

The protein localises to the cytoplasm. It catalyses the reaction [[Fe-S] cluster scaffold protein carrying a second [4Fe-4S](2+) cluster] + N(6)-octanoyl-L-lysyl-[protein] + 2 oxidized [2Fe-2S]-[ferredoxin] + 2 S-adenosyl-L-methionine + 4 H(+) = [[Fe-S] cluster scaffold protein] + N(6)-[(R)-dihydrolipoyl]-L-lysyl-[protein] + 4 Fe(3+) + 2 hydrogen sulfide + 2 5'-deoxyadenosine + 2 L-methionine + 2 reduced [2Fe-2S]-[ferredoxin]. It functions in the pathway protein modification; protein lipoylation via endogenous pathway; protein N(6)-(lipoyl)lysine from octanoyl-[acyl-carrier-protein]: step 2/2. Functionally, catalyzes the radical-mediated insertion of two sulfur atoms into the C-6 and C-8 positions of the octanoyl moiety bound to the lipoyl domains of lipoate-dependent enzymes, thereby converting the octanoylated domains into lipoylated derivatives. This Alcanivorax borkumensis (strain ATCC 700651 / DSM 11573 / NCIMB 13689 / SK2) protein is Lipoyl synthase.